The primary structure comprises 765 residues: Nucleolar transcription factor 1 (765 aa).

Met-1 is modified (N-acetylmethionine). The interval 1 to 21 is disordered; the sequence is MNGEADCPTDLEMAAPKGQDR. 2 consecutive DNA-binding regions (HMG box) follow at residues 112–180 and 196–264; these read PKKP…ARFR and PEKP…RDYI. Residue Thr-201 is modified to Phosphothreonine. Phosphoserine occurs at positions 273, 336, and 364. The segment at residues 298–362 is a DNA-binding region (HMG box 3); sequence TKPPPNSYSL…DYEVELLRFL (65 aa). The segment covering 370-379 has biased composition (basic and acidic residues); sequence QQRVLGEEKM. Residues 370–411 form a disordered region; the sequence is QQRVLGEEKMLNINKKQTTSPASKKPSQEGGKGGSEKPKRPV. Residues Ser-389, Ser-412, Ser-433, Ser-435, Ser-484, Ser-495, Ser-546, Ser-584, and Ser-638 each carry the phosphoserine modification. DNA-binding regions (HMG box) lie at residues 407-475, 482-549, and 568-634; these read PKRP…GGER, PESP…SEMR, and KKPP…DLWV. The interval 456–487 is disordered; the sequence is YKAREAALKAQSERKPGGEREDRGKLPESPKR. The segment covering 457-487 has biased composition (basic and acidic residues); sequence KAREAALKAQSERKPGGEREDRGKLPESPKR. The disordered stretch occupies residues 546–576; the sequence is SEMRAPPAATNSSKKMKFQGEPKKPPMNGYQ. The tract at residues 649-765 is disordered; the sequence is ISNKRKNMTK…SGDSSDSGSN (117 aa). Residues 664 to 674 show a composition bias toward polar residues; it reads PKSSRTTLQSK. The segment covering 677-746 has biased composition (acidic residues); sequence SEEDDDEEEE…DDDEDEDNES (70 aa). The segment covering 747–765 has biased composition (low complexity); the sequence is EGSSSSSSSSGDSSDSGSN.

Homodimer. Part of Pol I pre-initiation complex (PIC), in which Pol I core assembles with RRN3 and promoter-bound UTBF and SL1/TIF-IB complex. Interacts with TOP2A in the context of Pol I complex. Interacts with TBP. Interacts with TAF1A. Interacts with RASL11A. Binds to IRS1 and PIK3CA. Interacts with DHX33. Interacts with PHF6. Interacts with CEBPA (isoform 1 and isoform 4). Interacts with DDX11. Interacts with NOP53. Interacts with ALKBH2. Post-translationally, phosphorylated and activated by PIK3CA.

Its subcellular location is the nucleus. The protein localises to the nucleolus. Functionally, recognizes the ribosomal RNA gene promoter and activates transcription mediated by RNA polymerase I through cooperative interactions with the transcription factor SL1/TIF-IB complex. It binds specifically to the upstream control element. This Mus musculus (Mouse) protein is Nucleolar transcription factor 1 (Ubtf).